We begin with the raw amino-acid sequence, 177 residues long: Large ribosomal subunit protein uL6 (177 aa).

The protein belongs to the universal ribosomal protein uL6 family. Part of the 50S ribosomal subunit.

Functionally, this protein binds to the 23S rRNA, and is important in its secondary structure. It is located near the subunit interface in the base of the L7/L12 stalk, and near the tRNA binding site of the peptidyltransferase center. The polypeptide is Large ribosomal subunit protein uL6 (Bartonella henselae (strain ATCC 49882 / DSM 28221 / CCUG 30454 / Houston 1) (Rochalimaea henselae)).